Here is a 132-residue protein sequence, read N- to C-terminus: Peptide methionine sulfoxide reductase MsrB (132 aa).

Residues 9 to 131 (DAQWRAELSP…NSASLSFHPK (123 aa)) enclose the MsrB domain. Zn(2+) is bound by residues Cys48, Cys51, Cys97, and Cys100. The active-site Nucleophile is Cys120.

The protein belongs to the MsrB Met sulfoxide reductase family. Requires Zn(2+) as cofactor.

It catalyses the reaction L-methionyl-[protein] + [thioredoxin]-disulfide + H2O = L-methionyl-(R)-S-oxide-[protein] + [thioredoxin]-dithiol. The polypeptide is Peptide methionine sulfoxide reductase MsrB (Thiobacillus denitrificans (strain ATCC 25259 / T1)).